Here is a 309-residue protein sequence, read N- to C-terminus: Calcium homeostasis modulator protein 5 (309 aa).

Residues 1–15 (MDAFQGILKFFLNQK) are Cytoplasmic-facing. 3 residues coordinate a 1,2-diacyl-sn-glycero-3-phosphate: lysine 15, arginine 32, and valine 37. Residues 16–37 (TVIGYSFMALLTVGSERLFSVV) traverse the membrane as a helical segment. The Extracellular portion of the chain corresponds to 38–45 (AFKCPCST). 3 disulfides stabilise this stretch: cysteine 41–cysteine 127, cysteine 43–cysteine 158, and cysteine 142–cysteine 149. The chain crosses the membrane as a helical span at residues 46 to 70 (ENMTYGLVFLFAPAWVLLILGFFLN). Topologically, residues 71–99 (NRSWRLFTGCCVNPRKIFPRGHSCRFFYV) are cytoplasmic. The chain crosses the membrane as a helical span at residues 100 to 129 (LGQITLSSLVAPVMWLSVALLNGTFYECAM). Glutamine 102 and asparagine 121 together coordinate a 1,2-diacyl-sn-glycero-3-phosphate. The Extracellular segment spans residues 130–174 (SGTRSSGLLELICKGKPKECWEELHKVSCGKTSMLPTVNEELKLS). A helical transmembrane segment spans residues 175 to 200 (LQAQSQILGWCLICSASFFSLLTTCY). The Cytoplasmic portion of the chain corresponds to 201–309 (ARCRSKVSYL…MVLVGTAHNM (109 aa)). Arginine 202 serves as a coordination point for a 1,2-diacyl-sn-glycero-3-phosphate.

It belongs to the CALHM family. As to quaternary structure, oligomerizes to form undecameric cone-shaped channels.

Its subcellular location is the membrane. Its function is as follows. May assemble to form large pore channels with gating and ion conductance likely regulated by membrane lipids. This chain is Calcium homeostasis modulator protein 5, found in Homo sapiens (Human).